Here is a 124-residue protein sequence, read N- to C-terminus: S-adenosylmethionine decarboxylase proenzyme (124 aa).

The active-site Schiff-base intermediate with substrate; via pyruvic acid is the Ser70. Ser70 is subject to Pyruvic acid (Ser); by autocatalysis. Catalysis depends on His75, which acts as the Proton acceptor; for processing activity. Cys90 functions as the Proton donor; for catalytic activity in the catalytic mechanism.

It belongs to the prokaryotic AdoMetDC family. Type 1 subfamily. In terms of assembly, heterotetramer of two alpha and two beta chains arranged as a dimer of alpha/beta heterodimers. The cofactor is pyruvate. Is synthesized initially as an inactive proenzyme. Formation of the active enzyme involves a self-maturation process in which the active site pyruvoyl group is generated from an internal serine residue via an autocatalytic post-translational modification. Two non-identical subunits are generated from the proenzyme in this reaction, and the pyruvate is formed at the N-terminus of the alpha chain, which is derived from the carboxyl end of the proenzyme. The post-translation cleavage follows an unusual pathway, termed non-hydrolytic serinolysis, in which the side chain hydroxyl group of the serine supplies its oxygen atom to form the C-terminus of the beta chain, while the remainder of the serine residue undergoes an oxidative deamination to produce ammonia and the pyruvoyl group blocking the N-terminus of the alpha chain.

The enzyme catalyses S-adenosyl-L-methionine + H(+) = S-adenosyl 3-(methylsulfanyl)propylamine + CO2. It participates in amine and polyamine biosynthesis; S-adenosylmethioninamine biosynthesis; S-adenosylmethioninamine from S-adenosyl-L-methionine: step 1/1. In terms of biological role, catalyzes the decarboxylation of S-adenosylmethionine to S-adenosylmethioninamine (dcAdoMet), the propylamine donor required for the synthesis of the polyamines spermine and spermidine from the diamine putrescine. This Pyrobaculum neutrophilum (strain DSM 2338 / JCM 9278 / NBRC 100436 / V24Sta) (Thermoproteus neutrophilus) protein is S-adenosylmethionine decarboxylase proenzyme.